We begin with the raw amino-acid sequence, 334 residues long: Transcription initiation factor IIB (334 aa).

Residues 34–65 (TESVCPECKSRQLVHDYERAELVCQNCGLVID) form a TFIIB-type zinc finger. Zn(2+)-binding residues include Cys-38, Cys-41, Cys-57, and Cys-60. A run of 2 repeats spans residues 151–234 (SELD…SREL) and 245–326 (DYVP…ELAE).

Belongs to the TFIIB family.

In terms of biological role, stabilizes TBP binding to an archaeal box-A promoter. Also responsible for recruiting RNA polymerase II to the pre-initiation complex (DNA-TBP-TFIIB). In Methanosphaerula palustris (strain ATCC BAA-1556 / DSM 19958 / E1-9c), this protein is Transcription initiation factor IIB.